The chain runs to 486 residues: Chromosomal replication initiator protein DnaA (486 aa).

Residues 1 to 79 (MEKSKNIWSL…GYNNIVIVFT (79 aa)) form a domain I, interacts with DnaA modulators region. The domain II stretch occupies residues 79–141 (TNQPPKTHSN…EEEPTNFKNP (63 aa)). The tract at residues 142 to 358 (FLKKRYTFEN…AAVTKLKAYI (217 aa)) is domain III, AAA+ region. The ATP site is built by G186, G188, K189, and T190. Residues 359–486 (DLDNIEIDIE…TELMNKIKKN (128 aa)) are domain IV, binds dsDNA.

Belongs to the DnaA family. Oligomerizes as a right-handed, spiral filament on DNA at oriC.

It localises to the cytoplasm. In terms of biological role, plays an essential role in the initiation and regulation of chromosomal replication. ATP-DnaA binds to the origin of replication (oriC) to initiate formation of the DNA replication initiation complex once per cell cycle. Binds the DnaA box (a 9 base pair repeat at the origin) and separates the double-stranded (ds)DNA. Forms a right-handed helical filament on oriC DNA; dsDNA binds to the exterior of the filament while single-stranded (ss)DNA is stabiized in the filament's interior. The ATP-DnaA-oriC complex binds and stabilizes one strand of the AT-rich DNA unwinding element (DUE), permitting loading of DNA polymerase. After initiation quickly degrades to an ADP-DnaA complex that is not apt for DNA replication. Binds acidic phospholipids. Binds to the bpuR promoter, possibly at 5'-TTTTTAAA-3'. In Borreliella burgdorferi (strain ATCC 35210 / DSM 4680 / CIP 102532 / B31) (Borrelia burgdorferi), this protein is Chromosomal replication initiator protein DnaA.